A 108-amino-acid polypeptide reads, in one-letter code: Colipase B (108 aa).

Residues 1–13 (LALLLVALAVAYA) form the signal peptide. A propeptide spans 14-18 (VPDPR) (enterostatin, activation peptide). Cystine bridges form between cysteine 30-cysteine 41, cysteine 36-cysteine 52, cysteine 40-cysteine 74, cysteine 62-cysteine 82, and cysteine 76-cysteine 100. Tryptophan 65 provides a ligand contact to taurodeoxycholate.

This sequence belongs to the colipase family. In terms of assembly, forms a 1:1 stoichiometric complex with pancreatic lipase. In terms of tissue distribution, expressed by the pancreas.

Its subcellular location is the secreted. Its function is as follows. Colipase is a cofactor of pancreatic lipase. It allows the lipase to anchor itself to the lipid-water interface. Without colipase the enzyme is washed off by bile salts, which have an inhibitory effect on the lipase. In terms of biological role, enterostatin has a biological activity as a satiety signal. This is Colipase B (CLPS2) from Equus caballus (Horse).